Here is a 158-residue protein sequence, read N- to C-terminus: 6,7-dimethyl-8-ribityllumazine synthase (158 aa).

5-amino-6-(D-ribitylamino)uracil-binding positions include Phe22, 57-59 (AVE), and 81-83 (AVI). A (2S)-2-hydroxy-3-oxobutyl phosphate-binding site is contributed by 86-87 (GT). The active-site Proton donor is the His89. Phe114 contributes to the 5-amino-6-(D-ribitylamino)uracil binding site. Arg128 lines the (2S)-2-hydroxy-3-oxobutyl phosphate pocket.

The protein belongs to the DMRL synthase family. Forms an icosahedral capsid composed of 60 subunits, arranged as a dodecamer of pentamers.

It catalyses the reaction (2S)-2-hydroxy-3-oxobutyl phosphate + 5-amino-6-(D-ribitylamino)uracil = 6,7-dimethyl-8-(1-D-ribityl)lumazine + phosphate + 2 H2O + H(+). It participates in cofactor biosynthesis; riboflavin biosynthesis; riboflavin from 2-hydroxy-3-oxobutyl phosphate and 5-amino-6-(D-ribitylamino)uracil: step 1/2. Its function is as follows. Catalyzes the formation of 6,7-dimethyl-8-ribityllumazine by condensation of 5-amino-6-(D-ribitylamino)uracil with 3,4-dihydroxy-2-butanone 4-phosphate. This is the penultimate step in the biosynthesis of riboflavin. The sequence is that of 6,7-dimethyl-8-ribityllumazine synthase from Shewanella halifaxensis (strain HAW-EB4).